The chain runs to 408 residues: Phosphoglycerate kinase (408 aa).

Residues 24-26 (DLN), arginine 39, 62-65 (HLGR), arginine 121, and arginine 161 contribute to the substrate site. ATP is bound by residues lysine 211, glycine 307, glutamate 338, and 364-367 (GGDS).

The protein belongs to the phosphoglycerate kinase family. As to quaternary structure, monomer.

The protein localises to the cytoplasm. The catalysed reaction is (2R)-3-phosphoglycerate + ATP = (2R)-3-phospho-glyceroyl phosphate + ADP. It participates in carbohydrate degradation; glycolysis; pyruvate from D-glyceraldehyde 3-phosphate: step 2/5. In Pseudarthrobacter chlorophenolicus (strain ATCC 700700 / DSM 12829 / CIP 107037 / JCM 12360 / KCTC 9906 / NCIMB 13794 / A6) (Arthrobacter chlorophenolicus), this protein is Phosphoglycerate kinase.